Reading from the N-terminus, the 105-residue chain is Immunoglobulin lambda-like polypeptide 1 (105 aa).

The segment at 1-105 (QPKSDPLVTL…EKSVSPAECS (105 aa)) is c region. The 95-residue stretch at 6–100 (PLVTLFLPSL…EGNTVEKSVS (95 aa)) folds into the Ig-like C1-type domain. A disulfide bridge connects residues C27 and C86.

As to quaternary structure, associates non-covalently with VPREB1A. Interacts with SYNV1/HRD1 (via N-terminus); this interaction leads to increased IGLL1 ubiquitination and degradation in pre-B cells, possibly through a lysosomal, not proteasomal, pathway.

Its subcellular location is the endoplasmic reticulum. The protein resides in the secreted. Functionally, critical for B-cell development. The polypeptide is Immunoglobulin lambda-like polypeptide 1 (Igll1) (Mus spretus (Western Mediterranean mouse)).